A 502-amino-acid polypeptide reads, in one-letter code: Bone morphogenetic protein receptor type-1B (502 aa).

Residues 1 to 13 (MLLRSSGKLNVGT) form the signal peptide. A disordered region spans residues 1-24 (MLLRSSGKLNVGTKKEDGESTAPT). Topologically, residues 14-126 (KKEDGESTAP…DFVDGPIHHK (113 aa)) are extracellular. Disulfide bonds link Cys32/Cys53, Cys34/Cys38, Cys47/Cys71, Cys81/Cys95, and Cys96/Cys102. Residues 127–148 (ALLISVTVCSLLLVLIILFCYF) traverse the membrane as a helical segment. The Cytoplasmic segment spans residues 149–502 (RYKRQEARPR…KMSESQDIKL (354 aa)). Residues 174-203 (ESLRDLIEQSQSSGSGSGLPLLVQRTIAKQ) enclose the GS domain. In terms of domain architecture, Protein kinase spans 204–494 (IQMVKQIGKG…LRVKKTLAKM (291 aa)). Residues 210–218 (IGKGRYGEV) and Lys231 contribute to the ATP site. Catalysis depends on Asp332, which acts as the Proton acceptor.

It belongs to the protein kinase superfamily. TKL Ser/Thr protein kinase family. TGFB receptor subfamily. Interacts with high affinity with GDF5; positively regulates chondrocyte differentiation. Interacts with SCUBE3. Interacts with TSC22D1/TSC-22. Interacts with TGFBR3. It depends on Mg(2+) as a cofactor. Requires Mn(2+) as cofactor. In terms of processing, autophosphorylated.

It localises to the cell membrane. The catalysed reaction is L-threonyl-[receptor-protein] + ATP = O-phospho-L-threonyl-[receptor-protein] + ADP + H(+). It carries out the reaction L-seryl-[receptor-protein] + ATP = O-phospho-L-seryl-[receptor-protein] + ADP + H(+). Functionally, on ligand binding, forms a receptor complex consisting of two type II and two type I transmembrane serine/threonine kinases. Type II receptors phosphorylate and activate type I receptors which autophosphorylate, then bind and activate SMAD transcriptional regulators. Receptor for BMP7/OP-1. Receptor for GDF5. Positively regulates chondrocyte differentiation through GDF5 interaction. The chain is Bone morphogenetic protein receptor type-1B (Bmpr1b) from Mus musculus (Mouse).